We begin with the raw amino-acid sequence, 435 residues long: Estrogen-related receptor gamma (435 aa).

Positions 1–64 (MSNKDRHIDS…GLDSPPLYPS (64 aa)) are disordered. The segment covering 10 to 29 (SSCSSFIKTEPSSPASLTDS) has biased composition (polar residues). Over residues 34–47 (SPGGSSDASGSYSS) the composition is skewed to low complexity. A DNA-binding region (nuclear receptor) is located at residues 102–177 (KRLCLVCGDI…VGMLKEGVRL (76 aa)). 2 consecutive NR C4-type zinc fingers follow at residues 105–125 (CLVC…CEAC) and 141–160 (CPAT…CQAC). An NR LBD domain is found at 210–434 (PYNKIVSHLL…KLFSEMLEAK (225 aa)).

It belongs to the nuclear hormone receptor family. NR3 subfamily. Homodimer. Interacts with NRIP1, NCOA1 and NCOR2. Binds TLE1, PNRC1 and PNRC2. Binds GRIP1. Post-translationally, acetylated by PCAF/KAT2 (in vitro).

Its subcellular location is the nucleus. Functionally, orphan receptor that acts as a transcription activator in the absence of bound ligand. Binds specifically to an estrogen response element and activates reporter genes controlled by estrogen response elements. Induces the expression of PERM1 in the skeletal muscle. This Pongo abelii (Sumatran orangutan) protein is Estrogen-related receptor gamma (ESRRG).